A 288-amino-acid chain; its full sequence is ATP synthase gamma chain (288 aa).

Belongs to the ATPase gamma chain family. In terms of assembly, F-type ATPases have 2 components, CF(1) - the catalytic core - and CF(0) - the membrane proton channel. CF(1) has five subunits: alpha(3), beta(3), gamma(1), delta(1), epsilon(1). CF(0) has three main subunits: a, b and c.

The protein localises to the cell membrane. Its function is as follows. Produces ATP from ADP in the presence of a proton gradient across the membrane. The gamma chain is believed to be important in regulating ATPase activity and the flow of protons through the CF(0) complex. The polypeptide is ATP synthase gamma chain (Symbiobacterium thermophilum (strain DSM 24528 / JCM 14929 / IAM 14863 / T)).